The primary structure comprises 430 residues: Sphingosine-1-phosphate phosphatase 1 (430 aa).

Residues 34 to 100 (GSPKAGEDAE…PRRAGSLRRN (67 aa)) form a disordered region. Position 101 is a phosphoserine (serine 101). Threonine 103 carries the post-translational modification Phosphothreonine. The next 4 membrane-spanning stretches (helical) occupy residues 121–141 (FCFG…PFWI), 152–172 (LVII…IIRW), 193–213 (MPST…LLTY), and 216–236 (WQYP…LVCL). The segment at 167 to 175 (KDIIRWPRP) is phosphatase sequence motif I. The segment at 194–197 (PSTH) is phosphatase sequence motif II. Residue histidine 197 is the Proton donor of the active site. The interval 237 to 248 (SRIYMGMHSILD) is phosphatase sequence motif III. Histidine 244 (nucleophile) is an active-site residue. 5 consecutive transmembrane segments (helical) span residues 246–266 (ILDV…FYPL), 279–299 (YAPL…FTLD), 311–331 (ILGS…LGIS), 348–368 (VTLF…VLFV), and 409–429 (YGTV…FIGI).

The protein belongs to the type 2 lipid phosphate phosphatase family.

It localises to the endoplasmic reticulum membrane. The protein localises to the cell membrane. The catalysed reaction is sphinganine 1-phosphate + H2O = sphinganine + phosphate. It carries out the reaction sphing-4-enine 1-phosphate + H2O = sphing-4-enine + phosphate. Its function is as follows. Specifically dephosphorylates sphingosine 1-phosphate (S1P), dihydro-S1P, and phyto-S1P. Does not act on ceramide 1-phosphate, lysophosphatidic acid or phosphatidic acid. Sphingosine-1-phosphate phosphatase activity is needed for efficient recycling of sphingosine into the sphingolipid synthesis pathway. Regulates the intracellular levels of the bioactive sphingolipid metabolite S1P that regulates diverse biological processes acting both as an extracellular receptor ligand or as an intracellular second messenger. Involved in efficient ceramide synthesis from exogenous sphingoid bases. Converts S1P to sphingosine, which is readily metabolized to ceramide via ceramide synthase. In concert with sphingosine kinase 2 (SphK2), recycles sphingosine into ceramide through a phosphorylation/dephosphorylation cycle. Regulates endoplasmic-to-Golgi trafficking of ceramides, resulting in the regulation of ceramide levels in the endoplasmic reticulum, preferentially long-chain ceramide species, and influences the anterograde membrane transport of both ceramide and proteins from the endoplasmic reticulum to the Golgi apparatus. The modulation of intracellular ceramide levels in turn regulates apoptosis. Via S1P levels, modulates resting tone, intracellular Ca(2+) and myogenic vasoconstriction in resistance arteries. Also involved in unfolded protein response (UPR) and ER stress-induced autophagy via regulation of intracellular S1P levels. Involved in the regulation of epidermal homeostasis and keratinocyte differentiation. The polypeptide is Sphingosine-1-phosphate phosphatase 1 (Rattus norvegicus (Rat)).